The chain runs to 152 residues: Aspartate carbamoyltransferase regulatory chain (152 aa).

Residues C108, C113, C136, and C139 each coordinate Zn(2+).

This sequence belongs to the PyrI family. Contains catalytic and regulatory chains. The cofactor is Zn(2+).

In terms of biological role, involved in allosteric regulation of aspartate carbamoyltransferase. This Thermococcus kodakarensis (strain ATCC BAA-918 / JCM 12380 / KOD1) (Pyrococcus kodakaraensis (strain KOD1)) protein is Aspartate carbamoyltransferase regulatory chain.